Here is a 464-residue protein sequence, read N- to C-terminus: Arginine biosynthesis bifunctional protein ArgJ, chloroplastic (464 aa).

The substrate site is built by threonine 208, lysine 234, threonine 245, glutamate 332, asparagine 459, and threonine 464. Residue threonine 245 is the Nucleophile of the active site.

The protein belongs to the ArgJ family. Heterodimer of an alpha and a beta chain.

The protein localises to the plastid. It is found in the chloroplast. The catalysed reaction is N(2)-acetyl-L-ornithine + L-glutamate = N-acetyl-L-glutamate + L-ornithine. It carries out the reaction L-glutamate + acetyl-CoA = N-acetyl-L-glutamate + CoA + H(+). It participates in amino-acid biosynthesis; L-arginine biosynthesis; L-ornithine and N-acetyl-L-glutamate from L-glutamate and N(2)-acetyl-L-ornithine (cyclic): step 1/1. The protein operates within amino-acid biosynthesis; L-arginine biosynthesis; N(2)-acetyl-L-ornithine from L-glutamate: step 1/4. Catalyzes two activities which are involved in the cyclic version of arginine biosynthesis: the synthesis of acetylglutamate from glutamate and acetyl-CoA, and of ornithine by transacetylation between acetylornithine and glutamate. This Sorghum bicolor (Sorghum) protein is Arginine biosynthesis bifunctional protein ArgJ, chloroplastic.